Consider the following 108-residue polypeptide: Large ribosomal subunit protein uL24 (108 aa).

It belongs to the universal ribosomal protein uL24 family. In terms of assembly, part of the 50S ribosomal subunit.

Functionally, one of two assembly initiator proteins, it binds directly to the 5'-end of the 23S rRNA, where it nucleates assembly of the 50S subunit. Its function is as follows. One of the proteins that surrounds the polypeptide exit tunnel on the outside of the subunit. In Mycoplasma capricolum subsp. capricolum (strain California kid / ATCC 27343 / NCTC 10154), this protein is Large ribosomal subunit protein uL24.